We begin with the raw amino-acid sequence, 347 residues long: D-alanine--D-alanine ligase (347 aa).

One can recognise an ATP-grasp domain in the interval 138–339; that stretch reads KILCSHAGIP…YSQVIETILA (202 aa). 171-226 is an ATP binding site; sequence SDRFTFPLFVKPVDAGSSFGCTFVDFFEQLPVAIEHALQHGKSAIVEPALDAPEVF. 3 residues coordinate Mg(2+): Asp296, Glu308, and Asn310.

This sequence belongs to the D-alanine--D-alanine ligase family. Mg(2+) is required as a cofactor. The cofactor is Mn(2+).

It is found in the cytoplasm. The catalysed reaction is 2 D-alanine + ATP = D-alanyl-D-alanine + ADP + phosphate + H(+). The protein operates within cell wall biogenesis; peptidoglycan biosynthesis. Its function is as follows. Cell wall formation. The chain is D-alanine--D-alanine ligase from Tropheryma whipplei (strain TW08/27) (Whipple's bacillus).